We begin with the raw amino-acid sequence, 633 residues long: Threonine--tRNA ligase (633 aa).

One can recognise a TGS domain in the interval 1 to 61; it reads MINVYFSDNS…TEDCKFEVIT (61 aa). Positions 242 to 533 are catalytic; it reads DHRKIGKELE…LIEHHSGKLP (292 aa). Zn(2+)-binding residues include cysteine 333, histidine 384, and histidine 510.

Belongs to the class-II aminoacyl-tRNA synthetase family. In terms of assembly, homodimer. Requires Zn(2+) as cofactor.

It localises to the cytoplasm. It catalyses the reaction tRNA(Thr) + L-threonine + ATP = L-threonyl-tRNA(Thr) + AMP + diphosphate + H(+). Its function is as follows. Catalyzes the attachment of threonine to tRNA(Thr) in a two-step reaction: L-threonine is first activated by ATP to form Thr-AMP and then transferred to the acceptor end of tRNA(Thr). Also edits incorrectly charged L-seryl-tRNA(Thr). This is Threonine--tRNA ligase from Ehrlichia ruminantium (strain Gardel).